The following is a 501-amino-acid chain: UDP-N-acetylmuramoyl-L-alanyl-D-glutamate--2,6-diaminopimelate ligase (501 aa).

Residues Leu-26, Ser-28, and 43–45 (HQC) each bind UDP-N-acetyl-alpha-D-muramoyl-L-alanyl-D-glutamate. ATP is bound at residue 123–129 (GTNGKTT). Residues Asn-164, 165-166 (TT), Ser-192, Gln-198, and Arg-200 each bind UDP-N-acetyl-alpha-D-muramoyl-L-alanyl-D-glutamate. Lys-232 carries the post-translational modification N6-carboxylysine. Meso-2,6-diaminopimelate contacts are provided by residues Arg-398, 422-425 (DNPR), Gly-473, and Glu-477. The short motif at 422 to 425 (DNPR) is the Meso-diaminopimelate recognition motif element.

The protein belongs to the MurCDEF family. MurE subfamily. Mg(2+) serves as cofactor. Carboxylation is probably crucial for Mg(2+) binding and, consequently, for the gamma-phosphate positioning of ATP.

It is found in the cytoplasm. It carries out the reaction UDP-N-acetyl-alpha-D-muramoyl-L-alanyl-D-glutamate + meso-2,6-diaminopimelate + ATP = UDP-N-acetyl-alpha-D-muramoyl-L-alanyl-gamma-D-glutamyl-meso-2,6-diaminopimelate + ADP + phosphate + H(+). It participates in cell wall biogenesis; peptidoglycan biosynthesis. Functionally, catalyzes the addition of meso-diaminopimelic acid to the nucleotide precursor UDP-N-acetylmuramoyl-L-alanyl-D-glutamate (UMAG) in the biosynthesis of bacterial cell-wall peptidoglycan. In Haemophilus ducreyi (strain 35000HP / ATCC 700724), this protein is UDP-N-acetylmuramoyl-L-alanyl-D-glutamate--2,6-diaminopimelate ligase.